The chain runs to 467 residues: Ankyrin repeat and SOCS box protein 10 (467 aa).

7 ANK repeats span residues 115–144 (ELTTPLHVAASRGHTEVLELLLRRRAKPDS), 147–176 (GGRTALHEACSAGHAACVRVLLVAGADPNT), 180–209 (DGKRPLHLCRGPGILECVELLLKFGAQVDG), 214–243 (EEETPLHIAARLGHVELADLLLRWGACPDV), 247–289 (EGWT…DADA), 293–322 (DKQRPLHLACRHGHSAVVQLLLSCGVNANA), and 326–361 (GGHTPLHCALLGPTTAVAHSPEHTVRDLLNHGAVRV). Residues 412–467 (YSSLFALVRQPRSLQHLCRCALRSHLEGCLPHALPRLPLPPRMLRFLQLDFEDLLY) form the SOCS box domain.

The protein belongs to the ankyrin SOCS box (ASB) family.

The protein resides in the nucleus. It is found in the cytoplasm. Its pathway is protein modification; protein ubiquitination. Functionally, may be a substrate-recognition component of a SCF-like ECS (Elongin-Cullin-SOCS-box protein) E3 ubiquitin-protein ligase complex which mediates the ubiquitination and subsequent proteasomal degradation of target proteins. This chain is Ankyrin repeat and SOCS box protein 10 (Asb10), found in Mus musculus (Mouse).